We begin with the raw amino-acid sequence, 310 residues long: Membrane protein insertase YidC 2 (310 aa).

A signal peptide spans 1–23 (MKKTLKRILFSSLSLSILLLLTG). The N-palmitoyl cysteine moiety is linked to residue cysteine 24. A lipid anchor (S-diacylglycerol cysteine) is attached at cysteine 24. 5 helical membrane-spanning segments follow: residues 33–53 (PYGV…TYFA), 58–78 (LGFG…ILPL), 135–155 (FGGI…AIFF), 180–200 (LTVI…QGVP), and 219–239 (VFMS…GGIF). The segment at 262-310 (EYTKNPPKAYKSNNARKDVTSSTKTTESNQAIITSKKTNRNAGKQKRRG) is disordered. Polar residues predominate over residues 281–297 (TSSTKTTESNQAIITSK). Basic residues predominate over residues 298–310 (KTNRNAGKQKRRG).

It belongs to the OXA1/ALB3/YidC family. Type 2 subfamily.

The protein localises to the cell membrane. Its function is as follows. Required for the insertion and/or proper folding and/or complex formation of integral membrane proteins into the membrane. Involved in integration of membrane proteins that insert both dependently and independently of the Sec translocase complex, as well as at least some lipoproteins. This is Membrane protein insertase YidC 2 from Streptococcus agalactiae serotype III (strain NEM316).